We begin with the raw amino-acid sequence, 95 residues long: Translation initiation factor 1A (95 aa).

The 75-residue stretch at 7–81 (GRKNLRMPED…DKADVTWRYE (75 aa)) folds into the S1-like domain.

The protein belongs to the eIF-1A family.

Seems to be required for maximal rate of protein biosynthesis. Enhances ribosome dissociation into subunits and stabilizes the binding of the initiator Met-tRNA(I) to 40 S ribosomal subunits. The sequence is that of Translation initiation factor 1A (eIF1A) from Halobacterium salinarum (strain ATCC 29341 / DSM 671 / R1).